We begin with the raw amino-acid sequence, 91 residues long: Elongation factor 1-beta (91 aa).

It belongs to the EF-1-beta/EF-1-delta family.

Functionally, promotes the exchange of GDP for GTP in EF-1-alpha/GDP, thus allowing the regeneration of EF-1-alpha/GTP that could then be used to form the ternary complex EF-1-alpha/GTP/AAtRNA. The polypeptide is Elongation factor 1-beta (Thermofilum pendens (strain DSM 2475 / Hrk 5)).